The following is a 144-amino-acid chain: Putative RNase YutE (144 aa).

Arg-96 is an active-site residue. The RX(4)HXY motif motif lies at 96–103 (RKTLVQQY).

The protein belongs to the HepT RNase toxin family. As to quaternary structure, homodimer, probably forms a complex with cognate antitoxin YutD.

In terms of biological role, probable toxic component of a putative type VII toxin-antitoxin (TA) system, probably an RNase. Probably neutralized by cognate antitoxin YutD. The polypeptide is Putative RNase YutE (yutE) (Bacillus subtilis (strain 168)).